The primary structure comprises 491 residues: MAIAVLGPTFLDLAENVESSVANISFIFVGRSMGYLGGSVLGGILFEQINQHLLLGISMLATAAGLFVVPWCKKAVLLTAVMSVVGMSMGFLDTGGNIIILNTWEDQAGPHIQALHFSFALGAFVAPILAKLALEFLPLDKKSFNVSEPFLEQSALPFGIKKSMLSYIVIGTYILLVSLFLFILFSKSRPRQSSGKASDDKFRTARYHNAVIFLLFLFFFCYVGAEVAYGSYIFTYAITYITNIENNYAAGLNSLFWGVFAAVRGLAICFATCLYPGTMLLLSVIGCTLSSLILVLFSRNHLLLWVGTAVYGASMATTFPSGFSWVQQYTTIGGKSASLFVVGAALGEMAIPASVGYLQGMFPNFPVLMYTALASSTMTAILFPVMYKLATAQQDQAQYNRVESDDRRALLSSSGMEEEDEDEAQNWNEADFETIEMNDQMKNSVTVISEDTPGNSAPSEILKHSTKSNGAEAAANKSPSRKHNTDREKND.

A run of 11 helical transmembrane segments spans residues 26 to 46, 52 to 72, 81 to 101, 119 to 139, 165 to 185, 210 to 230, 255 to 275, 277 to 297, 303 to 323, 338 to 358, and 365 to 385; these read FIFV…GILF, HLLL…VPWC, VMSV…IIIL, FALG…FLPL, LSYI…FILF, AVIF…VAYG, LFWG…TCLY, GTML…LVLF, LLWV…PSGF, SLFV…VGYL, and FPVL…LFPV. Disordered regions lie at residues 397 to 425 and 438 to 491; these read AQYN…DEAQ and NDQM…EKND. The span at 416-425 shows a compositional bias: acidic residues; the sequence is MEEEDEDEAQ. Positions 440–458 are enriched in polar residues; it reads QMKNSVTVISEDTPGNSAP.

Belongs to the major facilitator superfamily.

The protein resides in the apical cell membrane. May function as a sodium-dependent glucose transporter. Potential channels for urea in the inner medulla of kidney. This Xenopus laevis (African clawed frog) protein is Sodium-dependent glucose transporter 1 (mfsd4b).